We begin with the raw amino-acid sequence, 249 residues long: MPRYRITIEYDGRPFSGWQRQDNAPSVQESLERAAEKLDGAPVLVYGAGRTDSGVHALAQVAHLDLAKDLSTDKVRDAINYHLKPDPVAVIEAARVSDDFHARFSATRRHYLYRMIDRRAPLTLDRGQVWRVTRKLDAEAMHHAAQALLGQHDFTTFRDAQCQAESPVKSLDAISVSRYGEEVQLTCSARSFLHRQVRSMVGSLVEVGVGKWSARDFKRALDAADRSRCGPVAPADGLYLTAVDYPGPA.

Residue Asp52 is the Nucleophile of the active site. Tyr111 is a binding site for substrate.

The protein belongs to the tRNA pseudouridine synthase TruA family. As to quaternary structure, homodimer.

It catalyses the reaction uridine(38/39/40) in tRNA = pseudouridine(38/39/40) in tRNA. Functionally, formation of pseudouridine at positions 38, 39 and 40 in the anticodon stem and loop of transfer RNAs. The sequence is that of tRNA pseudouridine synthase A from Maricaulis maris (strain MCS10) (Caulobacter maris).